Reading from the N-terminus, the 175-residue chain is Translation initiation factor IF-3 (175 aa).

It belongs to the IF-3 family. In terms of assembly, monomer.

The protein localises to the cytoplasm. In terms of biological role, IF-3 binds to the 30S ribosomal subunit and shifts the equilibrium between 70S ribosomes and their 50S and 30S subunits in favor of the free subunits, thus enhancing the availability of 30S subunits on which protein synthesis initiation begins. The chain is Translation initiation factor IF-3 from Staphylococcus carnosus (strain TM300).